Here is a 535-residue protein sequence, read N- to C-terminus: Major glycerophosphoinositol permease GIT3 (535 aa).

The helical transmembrane segment at 49-69 (VVTSVKANSLWPAFASGAGLF) threads the bilayer. Residue N75 is glycosylated (N-linked (GlcNAc...) asparagine). Transmembrane regions (helical) follow at residues 101-121 (NIAS…GYIS), 137-157 (LIFF…QGFF), 165-185 (FFLG…ASEF), 204-224 (AMID…IWIF), and 232-252 (LWRV…FMRL). N-linked (GlcNAc...) asparagine glycosylation occurs at N256. Transmembrane regions (helical) follow at residues 275-295 (WWLI…IWFI), 324-344 (WGWS…GAIS), 352-372 (LTLA…SACL), 378-398 (HIAG…FGPG), 419-439 (GIAA…FPAI), and 455-475 (VPFY…IFFC). An N-linked (GlcNAc...) asparagine glycan is attached at N532.

This sequence belongs to the major facilitator superfamily. Sugar transporter (TC 2.A.1.1) family.

It is found in the cell membrane. The enzyme catalyses sn-glycerol 3-phosphocholine(out) = sn-glycerol 3-phosphocholine(in). Its function is as follows. Glycerophosphodiester transporter that mediates uptake of glycerophosphocholine (GroPCho) with GIT4. GIT3 acts as the major GroPCho permease. Does not possess detectable glycerophosphoinositol (GroPIns) transport activity. The expanded ability to utilize GroPIns and GroPCho results from the organism's pathogenic nature and its need to occupy a variety of environments within its host organism. This possibility is buttressed by the fact that GroPIns and GroPCho are present and abundant in human fluids. The protein is Major glycerophosphoinositol permease GIT3 of Candida albicans (strain SC5314 / ATCC MYA-2876) (Yeast).